A 91-amino-acid chain; its full sequence is Small ribosomal subunit protein bS18 (91 aa).

Belongs to the bacterial ribosomal protein bS18 family. As to quaternary structure, part of the 30S ribosomal subunit. Forms a tight heterodimer with protein bS6.

Binds as a heterodimer with protein bS6 to the central domain of the 16S rRNA, where it helps stabilize the platform of the 30S subunit. This chain is Small ribosomal subunit protein bS18, found in Burkholderia multivorans (strain ATCC 17616 / 249).